Reading from the N-terminus, the 146-residue chain is Putative nickel-responsive regulator 1 (146 aa).

4 residues coordinate Ni(2+): H81, H92, Y94, and C100.

This sequence belongs to the transcriptional regulatory CopG/NikR family. Ni(2+) is required as a cofactor.

Transcriptional regulator. The protein is Putative nickel-responsive regulator 1 of Methanosarcina mazei (strain ATCC BAA-159 / DSM 3647 / Goe1 / Go1 / JCM 11833 / OCM 88) (Methanosarcina frisia).